We begin with the raw amino-acid sequence, 501 residues long: Glycerol kinase (501 aa).

Threonine 16 is an ADP binding site. The ATP site is built by threonine 16, threonine 17, and serine 18. Threonine 16 contacts sn-glycerol 3-phosphate. ADP is bound at residue arginine 20. Positions 84, 85, 135, and 242 each coordinate sn-glycerol 3-phosphate. The glycerol site is built by arginine 84, glutamate 85, tyrosine 135, aspartate 242, and glutamine 243. ADP is bound by residues threonine 264 and glycine 307. Residues threonine 264, glycine 307, glutamine 311, and glycine 408 each contribute to the ATP site. An ADP-binding site is contributed by glycine 408.

It belongs to the FGGY kinase family.

It catalyses the reaction glycerol + ATP = sn-glycerol 3-phosphate + ADP + H(+). The protein operates within polyol metabolism; glycerol degradation via glycerol kinase pathway; sn-glycerol 3-phosphate from glycerol: step 1/1. Functionally, key enzyme in the regulation of glycerol uptake and metabolism. Catalyzes the phosphorylation of glycerol to yield sn-glycerol 3-phosphate. The sequence is that of Glycerol kinase from Saccharolobus islandicus (strain M.14.25 / Kamchatka #1) (Sulfolobus islandicus).